The primary structure comprises 264 residues: MTDNLRLHGFNNLTSSLSFNIYDICYAKTEEQRKAYIDYIDELYNAERLTQILKDVTNIIGAHVLNISRQDYEPHGASVTILIAEHELDEHDPEHIEPGPGPLPQTVLGHLDKSHVTVHTYPESHPDNGISTFRLDIDVSTCGMISPLKALNYLIHSFDSDIVTTDYRVRGFTRDVDGRKLFIDHDITSIQDYLAEDTKRAYQMVDVNVYQENMFHTKMLLKDFDLDNYLFGSTRRDLTFEEARDIEDRLRKEMLEIFYSRNLD.

The Schiff-base intermediate with substrate; via pyruvic acid role is filled by S114. A Pyruvic acid (Ser); by autocatalysis modification is found at S114. Residue H119 is the Proton acceptor; for processing activity of the active site. Residue C142 is the Proton donor; for catalytic activity of the active site.

It belongs to the prokaryotic AdoMetDC family. Type 2 subfamily. Heterooctamer of four alpha and four beta chains arranged as a tetramer of alpha/beta heterodimers. Requires pyruvate as cofactor. In terms of processing, is synthesized initially as an inactive proenzyme. Formation of the active enzyme involves a self-maturation process in which the active site pyruvoyl group is generated from an internal serine residue via an autocatalytic post-translational modification. Two non-identical subunits are generated from the proenzyme in this reaction, and the pyruvate is formed at the N-terminus of the alpha chain, which is derived from the carboxyl end of the proenzyme. The post-translation cleavage follows an unusual pathway, termed non-hydrolytic serinolysis, in which the side chain hydroxyl group of the serine supplies its oxygen atom to form the C-terminus of the beta chain, while the remainder of the serine residue undergoes an oxidative deamination to produce ammonia and the pyruvoyl group blocking the N-terminus of the alpha chain.

It carries out the reaction S-adenosyl-L-methionine + H(+) = S-adenosyl 3-(methylsulfanyl)propylamine + CO2. It participates in amine and polyamine biosynthesis; S-adenosylmethioninamine biosynthesis; S-adenosylmethioninamine from S-adenosyl-L-methionine: step 1/1. In terms of biological role, catalyzes the decarboxylation of S-adenosylmethionine to S-adenosylmethioninamine (dcAdoMet), the propylamine donor required for the synthesis of the polyamines spermine and spermidine from the diamine putrescine. The protein is S-adenosylmethionine decarboxylase proenzyme of Chromohalobacter salexigens (strain ATCC BAA-138 / DSM 3043 / CIP 106854 / NCIMB 13768 / 1H11).